The sequence spans 35 residues: Neurotoxin (35 aa).

Cystine bridges form between Cys-7-Cys-27, Cys-14-Cys-32, and Cys-18-Cys-34.

As to expression, expressed by the venom gland.

The protein resides in the secreted. Its function is as follows. Neurotoxin. Decreases the action potential of myelinated nerves in mice and frogs. The protein is Neurotoxin of Buthus sp. (strain IY-2001) (Scorpion).